Consider the following 154-residue polypeptide: Small ribosomal subunit protein uS19B (154 aa).

S63 is subject to Phosphoserine.

This sequence belongs to the universal ribosomal protein uS19 family. In terms of assembly, component of the small ribosomal subunit (SSU). Mature yeast ribosomes consist of a small (40S) and a large (60S) subunit. The 40S small subunit contains 1 molecule of ribosomal RNA (18S rRNA) and at least 33 different proteins. The large 60S subunit contains 3 rRNA molecules (25S, 5.8S and 5S rRNA) and at least 46 different proteins.

Its subcellular location is the cytoplasm. The protein localises to the nucleus. The protein resides in the nucleolus. Functionally, component of the ribosome, a large ribonucleoprotein complex responsible for the synthesis of proteins in the cell. The small ribosomal subunit (SSU) binds messenger RNAs (mRNAs) and translates the encoded message by selecting cognate aminoacyl-transfer RNA (tRNA) molecules. The large subunit (LSU) contains the ribosomal catalytic site termed the peptidyl transferase center (PTC), which catalyzes the formation of peptide bonds, thereby polymerizing the amino acids delivered by tRNAs into a polypeptide chain. The nascent polypeptides leave the ribosome through a tunnel in the LSU and interact with protein factors that function in enzymatic processing, targeting, and the membrane insertion of nascent chains at the exit of the ribosomal tunnel. uS19 is involved in the nuclear export of the small ribosomal subunit precursor. Has a role in the late stage of the assembly of pre-40S particles within the nucleus and controls their export to the cytoplasm. In Schizosaccharomyces pombe (strain 972 / ATCC 24843) (Fission yeast), this protein is Small ribosomal subunit protein uS19B (rps1502).